The sequence spans 162 residues: NADH-quinone oxidoreductase subunit I (162 aa).

4Fe-4S ferredoxin-type domains follow at residues 53–83 (LRRY…IESE) and 93–122 (TRYD…ETRV). 8 residues coordinate [4Fe-4S] cluster: Cys-63, Cys-66, Cys-69, Cys-73, Cys-102, Cys-105, Cys-108, and Cys-112.

This sequence belongs to the complex I 23 kDa subunit family. In terms of assembly, NDH-1 is composed of 14 different subunits. Subunits NuoA, H, J, K, L, M, N constitute the membrane sector of the complex. [4Fe-4S] cluster serves as cofactor.

It is found in the cell inner membrane. The catalysed reaction is a quinone + NADH + 5 H(+)(in) = a quinol + NAD(+) + 4 H(+)(out). In terms of biological role, NDH-1 shuttles electrons from NADH, via FMN and iron-sulfur (Fe-S) centers, to quinones in the respiratory chain. The immediate electron acceptor for the enzyme in this species is believed to be ubiquinone. Couples the redox reaction to proton translocation (for every two electrons transferred, four hydrogen ions are translocated across the cytoplasmic membrane), and thus conserves the redox energy in a proton gradient. This chain is NADH-quinone oxidoreductase subunit I, found in Nitrosomonas europaea (strain ATCC 19718 / CIP 103999 / KCTC 2705 / NBRC 14298).